Consider the following 254-residue polypeptide: Type III pantothenate kinase (254 aa).

Residue 6 to 13 (DVGNSNIV) coordinates ATP. Substrate contacts are provided by residues Tyr100 and 107–110 (GADR). Asp109 serves as the catalytic Proton acceptor. Asp129 is a K(+) binding site. Thr132 is a binding site for ATP. Thr184 lines the substrate pocket.

Belongs to the type III pantothenate kinase family. As to quaternary structure, homodimer. Requires NH4(+) as cofactor. The cofactor is K(+).

The protein localises to the cytoplasm. It carries out the reaction (R)-pantothenate + ATP = (R)-4'-phosphopantothenate + ADP + H(+). The protein operates within cofactor biosynthesis; coenzyme A biosynthesis; CoA from (R)-pantothenate: step 1/5. Its function is as follows. Catalyzes the phosphorylation of pantothenate (Pan), the first step in CoA biosynthesis. The polypeptide is Type III pantothenate kinase (Citrifermentans bemidjiense (strain ATCC BAA-1014 / DSM 16622 / JCM 12645 / Bem) (Geobacter bemidjiensis)).